The sequence spans 791 residues: ATP-dependent 6-phosphofructokinase, platelet type (791 aa).

Residue M1 is modified to N-acetylmethionine. Residues 1-399 form an N-terminal catalytic PFK domain 1 region; it reads MDNKVSASPR…NLNTYKRLAI (399 aa). S6 carries the phosphoserine modification. S12 is modified (phosphoserine; by PKA). A Phosphoserine modification is found at S21. Residues G34, 97 to 98, and 127 to 130 each bind ATP; these read RS and GSGS. At S142 the chain carries Phosphoserine. Substrate-binding positions include 173–175, R210, 217–219, E273, R301, and 307–310; these read SID, MGR, and HVQR. The active-site Proton acceptor is the D175. S386 bears the Phosphoserine mark. K395 is subject to N6-acetyllysine. Residues 400–411 form an interdomain linker region; it reads KLPDDKIQKSNC. The tract at residues 412 to 791 is C-terminal regulatory PFK domain 2; it reads NVAVINVGAP…RGGPEEPAAI (380 aa). R481 provides a ligand contact to beta-D-fructose 2,6-bisphosphate. K486 carries the post-translational modification N6-acetyllysine. Beta-D-fructose 2,6-bisphosphate contacts are provided by residues 538–542, R576, 583–585, and E639; these read TVSNN and MGG. S540 carries an O-linked (GlcNAc) serine glycan. Y651 carries the phosphotyrosine modification. Residues R665 and 671–674 each bind beta-D-fructose 2,6-bisphosphate; that span reads HMQQ. K688 carries the N6-acetyllysine modification. R744 provides a ligand contact to beta-D-fructose 2,6-bisphosphate.

Belongs to the phosphofructokinase type A (PFKA) family. ATP-dependent PFK group I subfamily. Eukaryotic two domain clade 'E' sub-subfamily. As to quaternary structure, homo- and heterotetramers. Phosphofructokinase (PFK) enzyme functions as a tetramer composed of different combinations of 3 types of subunits, called PFKM (M), PFKL (L) and PFKP (P). The composition of the PFK tetramer differs according to the tissue type it is present in. The kinetic and regulatory properties of the tetrameric enzyme are dependent on the subunit composition, hence can vary across tissues. Interacts with ATG4B; promoting phosphorylation of ATG4B. Requires Mg(2+) as cofactor. Post-translationally, glcNAcylation decreases enzyme activity. Phosphorylation at Ser-386 promotes interaction with ATG4B.

Its subcellular location is the cytoplasm. The catalysed reaction is beta-D-fructose 6-phosphate + ATP = beta-D-fructose 1,6-bisphosphate + ADP + H(+). It participates in carbohydrate degradation; glycolysis; D-glyceraldehyde 3-phosphate and glycerone phosphate from D-glucose: step 3/4. With respect to regulation, allosterically activated by ADP, AMP, or fructose 2,6-bisphosphate, and allosterically inhibited by ATP or citrate. In terms of biological role, catalyzes the phosphorylation of D-fructose 6-phosphate to fructose 1,6-bisphosphate by ATP, the first committing step of glycolysis. The polypeptide is ATP-dependent 6-phosphofructokinase, platelet type (PFKP) (Oryctolagus cuniculus (Rabbit)).